Here is a 524-residue protein sequence, read N- to C-terminus: Na(+)/H(+) antiporter NhaB (524 aa).

The next 12 membrane-spanning stretches (helical) occupy residues 23-43, 44-64, 97-117, 120-140, 144-164, 203-223, 236-256, 304-324, 354-374, 392-412, 448-468, and 476-496; these read IAILAFLIINPLVFSLSPFYA, GWLLVIEFIFTLAMALKCYPL, LLLIFMVAGIYFMKQLLLFVF, LLLNIRSKIVLSLAFCLAAAF, FLDALTVIAVVISVAVGFYGI, LLMHAGVGTALGGVMTMVGEP, FVSFLLRMAPVTVPVFCCGIL, ALVGVWLVSALAFHLAEVGLI, FTALLTVFFSIVAVIIDQHLF, LFYLFNGLLSSISDNVFVGTV, ATPNGQAAFLFLLTSALAPLI, and VWMALPYTVVMTLVGLLCVIF.

The protein belongs to the NhaB Na(+)/H(+) (TC 2.A.34) antiporter family.

Its subcellular location is the cell inner membrane. The enzyme catalyses 2 Na(+)(in) + 3 H(+)(out) = 2 Na(+)(out) + 3 H(+)(in). Na(+)/H(+) antiporter that extrudes sodium in exchange for external protons. This is Na(+)/H(+) antiporter NhaB from Edwardsiella ictaluri (strain 93-146).